Here is a 2223-residue protein sequence, read N- to C-terminus: Sperm-associated antigen 17 (2223 aa).

Composition is skewed to basic and acidic residues over residues 144–172 (RENEKKVIEDKPKLEKDKGKAKSPKEKKA) and 200–212 (RRGEDDHTNRYID). The tract at residues 144-214 (RENEKKVIED…DHTNRYIDDE (71 aa)) is disordered. The stretch at 266–295 (NQQQEVLLQSEDLEAEKLKKENAIKELKTF) forms a coiled coil. 6 disordered regions span residues 387–416 (MPTSEAPQPAVPAPGKKKAQYEEPQAPPPV), 680–710 (MSVQDNESNREPSDPSQCDANNMKHSDLNNL), 731–762 (PQHESLEQTTNNEIKDDAVTKADSHEKKPKKM), 950–1015 (EERL…EPKI), 1179–1212 (GKIKGKEKPKESLKEEEHPKEEEKKEEEVEPEPV), and 1345–1378 (ETIPSEITNTKKGKSHKSQSSMAHKGEIHDPPPE). 3 stretches are compositionally biased toward basic and acidic residues: residues 743–756 (EIKDDAVTKADSHE), 950–999 (EERL…EQVK), and 1182–1205 (KGKEKPKESLKEEEHPKEEEKKEE). The stretch at 940–966 (WKEEQHRLAEEERLREEKKAEKKGKEA) forms a coiled coil. The span at 1345–1354 (ETIPSEITNT) shows a compositional bias: polar residues. A coiled-coil region spans residues 1874–1907 (RHTASSKRWKEKIDKTRKEIETTQNYLMDIKNRI). Disordered regions lie at residues 1938–1957 (TKKNEDANETAVQDTSDLNL) and 1962–2008 (HKVS…SYEP). A compositionally biased stretch (polar residues) spans 1988–1998 (TAQNQTENLTK).

In terms of assembly, interacts (via the C-terminus) with SPAG6; the interaction probably occurs on polymerized microtubules. Highly expressed in testis. Expressed in organs that contain cilia-bearing cells including brain, oviduct, lung, and uterus.

Its subcellular location is the cytoplasm. The protein localises to the cytoskeleton. It is found in the flagellum axoneme. It localises to the cytoplasmic vesicle. The protein resides in the secretory vesicle. Its subcellular location is the acrosome. The protein localises to the golgi apparatus. In terms of biological role, component of the central pair apparatus of ciliary axonemes. Plays a critical role in the function and structure of motile cilia. May play a role in endochondral bone formation, most likely because of a function in primary cilia of chondrocytes and osteoblasts. Essential for normal spermatogenesis and male fertility. Required for normal manchette structure, transport of proteins along the manchette microtubules and formation of the sperm head and flagellum. Essential for sperm flagellum development and proper assembly of the respiratory motile cilia central pair apparatus, but not the brain ependymal cilia. This chain is Sperm-associated antigen 17 (SPAG17), found in Homo sapiens (Human).